The sequence spans 123 residues: Large ribosomal subunit protein uL29 (123 aa).

At Lys-19 the chain carries N6-acetyllysine. A Glycyl lysine isopeptide (Lys-Gly) (interchain with G-Cter in SUMO2) cross-link involves residue Lys-25. Position 29 is a phosphoserine (Ser-29). Lys-43 is modified (N6-acetyllysine). The disordered stretch occupies residues 100 to 123 (EKLKTKKQQRKERLYPLRKYAVKA).

Belongs to the universal ribosomal protein uL29 family. As to quaternary structure, component of the large ribosomal subunit.

The protein localises to the cytoplasm. Functionally, component of the large ribosomal subunit. The ribosome is a large ribonucleoprotein complex responsible for the synthesis of proteins in the cell. This Mus musculus (Mouse) protein is Large ribosomal subunit protein uL29 (Rpl35).